The primary structure comprises 314 residues: Vacuolar membrane protein SCRG_03194 (314 aa).

Residues 32–60 are disordered; the sequence is KPTSSVVSETSSKSLPSLTSSAFSTSSGA. Residues 93-113 form a helical membrane-spanning segment; the sequence is VYIAVGAVIGAIFISILIWWL. Serine 148, serine 254, and serine 274 each carry phosphoserine. Residues 240 to 309 form a disordered region; that stretch reads EERKLNLNRP…PSMFLDDVLN (70 aa). The span at 254–269 shows a compositional bias: basic and acidic residues; sequence SPERKEKKINSMEGYH.

The protein belongs to the PRM5 family.

It localises to the vacuole membrane. The chain is Vacuolar membrane protein SCRG_03194 from Saccharomyces cerevisiae (strain RM11-1a) (Baker's yeast).